Reading from the N-terminus, the 557-residue chain is Inositol-3-phosphate synthase 1 (557 aa).

21 residues coordinate NAD(+): G67, G68, N69, N70, D141, S177, V178, Q188, R191, T228, A229, N230, T231, G278, S279, D303, S306, N337, N338, D339, and K352. A Phosphoserine modification is found at S279. S357 is modified (phosphoserine). G390, D391, D419, and S420 together coordinate NAD(+). A Phosphoserine modification is found at S523. A disordered region spans residues 527-557 (CKKGSAPTAPNGCTGDANGHSQAEAPQMPTT).

It belongs to the myo-inositol 1-phosphate synthase family. NAD(+) serves as cofactor. As to expression, expressed in testis (at protein level).

It localises to the cytoplasm. It carries out the reaction D-glucose 6-phosphate = 1D-myo-inositol 3-phosphate. Its pathway is polyol metabolism; myo-inositol biosynthesis; myo-inositol from D-glucose 6-phosphate: step 1/2. Key enzyme in myo-inositol biosynthesis pathway that catalyzes the conversion of glucose 6-phosphate to 1-myo-inositol 1-phosphate in a NAD-dependent manner. Rate-limiting enzyme in the synthesis of all inositol-containing compounds. This chain is Inositol-3-phosphate synthase 1 (ISYNA1), found in Bos taurus (Bovine).